The chain runs to 604 residues: Elongation factor 4 1 (604 aa).

In terms of domain architecture, tr-type G spans E10 to T191. GTP is bound by residues D22–T27 and N138–D141.

It belongs to the TRAFAC class translation factor GTPase superfamily. Classic translation factor GTPase family. LepA subfamily.

Its subcellular location is the cell inner membrane. It carries out the reaction GTP + H2O = GDP + phosphate + H(+). Functionally, required for accurate and efficient protein synthesis under certain stress conditions. May act as a fidelity factor of the translation reaction, by catalyzing a one-codon backward translocation of tRNAs on improperly translocated ribosomes. Back-translocation proceeds from a post-translocation (POST) complex to a pre-translocation (PRE) complex, thus giving elongation factor G a second chance to translocate the tRNAs correctly. Binds to ribosomes in a GTP-dependent manner. This is Elongation factor 4 1 from Rhodopirellula baltica (strain DSM 10527 / NCIMB 13988 / SH1).